Consider the following 176-residue polypeptide: Peroxynitrite isomerase 1 (176 aa).

The segment at 1-23 (MDENSTLSPAHSDAAASSSANTP) is disordered. Residues 8-20 (SPAHSDAAASSSA) show a composition bias toward low complexity. The GXWXGXG motif lies at 37 to 43 (GLWRGEG). Heme b is bound at residue His-168.

Belongs to the nitrobindin family. Homodimer. Requires heme b as cofactor.

It catalyses the reaction peroxynitrite = nitrate. The protein operates within nitrogen metabolism. Functionally, heme-binding protein able to scavenge peroxynitrite and to protect free L-tyrosine against peroxynitrite-mediated nitration, by acting as a peroxynitrite isomerase that converts peroxynitrite to nitrate. Therefore, this protein likely plays a role in peroxynitrite sensing and in the detoxification of reactive nitrogen and oxygen species (RNS and ROS, respectively). Is able to bind nitric oxide (NO) in vitro, but may act as a sensor of peroxynitrite levels in vivo. The chain is Peroxynitrite isomerase 1 from Rhodococcus jostii (strain RHA1).